Reading from the N-terminus, the 50-residue chain is Protein PsbN (50 aa).

A helical membrane pass occupies residues 14–34 (VAVTILAILLALTGFGLWTAF).

The protein belongs to the PsbN family.

It localises to the cellular thylakoid membrane. May play a role in photosystem I and II biogenesis. This is Protein PsbN from Prochlorococcus marinus (strain MIT 9312).